A 205-amino-acid chain; its full sequence is dITP/XTP pyrophosphatase (205 aa).

10–15 (TKNEGK) contacts substrate. The Mg(2+) site is built by Glu-44 and Asp-73. Asp-73 serves as the catalytic Proton acceptor. Residues Ser-74, 156–159 (FGYD), Lys-179, and 184–185 (HR) each bind substrate.

This sequence belongs to the HAM1 NTPase family. As to quaternary structure, homodimer. The cofactor is Mg(2+).

It catalyses the reaction XTP + H2O = XMP + diphosphate + H(+). The catalysed reaction is dITP + H2O = dIMP + diphosphate + H(+). The enzyme catalyses ITP + H2O = IMP + diphosphate + H(+). Functionally, pyrophosphatase that catalyzes the hydrolysis of nucleoside triphosphates to their monophosphate derivatives, with a high preference for the non-canonical purine nucleotides XTP (xanthosine triphosphate), dITP (deoxyinosine triphosphate) and ITP. Seems to function as a house-cleaning enzyme that removes non-canonical purine nucleotides from the nucleotide pool, thus preventing their incorporation into DNA/RNA and avoiding chromosomal lesions. The sequence is that of dITP/XTP pyrophosphatase from Dictyoglomus thermophilum (strain ATCC 35947 / DSM 3960 / H-6-12).